The chain runs to 419 residues: Enolase (419 aa).

Q161 is a binding site for (2R)-2-phosphoglycerate. The Proton donor role is filled by E205. Mg(2+) is bound by residues D240, E283, and D309. Residues K334, R363, S364, and K385 each contribute to the (2R)-2-phosphoglycerate site. K334 serves as the catalytic Proton acceptor.

This sequence belongs to the enolase family. Mg(2+) serves as cofactor.

It localises to the cytoplasm. Its subcellular location is the secreted. It is found in the cell surface. It carries out the reaction (2R)-2-phosphoglycerate = phosphoenolpyruvate + H2O. The protein operates within carbohydrate degradation; glycolysis; pyruvate from D-glyceraldehyde 3-phosphate: step 4/5. Catalyzes the reversible conversion of 2-phosphoglycerate (2-PG) into phosphoenolpyruvate (PEP). It is essential for the degradation of carbohydrates via glycolysis. The polypeptide is Enolase (Saccharolobus islandicus (strain L.S.2.15 / Lassen #1) (Sulfolobus islandicus)).